An 85-amino-acid polypeptide reads, in one-letter code: Antibacterial factor-related peptide 2 (85 aa).

A signal peptide spans 1 to 17 (MFVRSLFLALLLATIVA). A propeptide spanning residues 82-85 (IKRG) is cleaved from the precursor.

In terms of tissue distribution, expressed in the pharynx (at protein level). Detected in pharyngeal neurons and secretory cells.

The protein localises to the secreted. In terms of biological role, exhibits antimicrobial activity against the Gram-positive bacteria B.subtilis IFO 3134, K.varians MAFF 118076 and S.aureus ATCC 6538P, the Gram-negative bacteria A.tumefaciens MAFF 1001, B.bacteriovorus MAFF 106101 and K.pneumoniae MAFF 519002, and the yeasts C.krusei MAFF 114085, K.thermotolerans MAFF 113848 and T.delbrueckii MAFF 113811. The protein is Antibacterial factor-related peptide 2 of Caenorhabditis elegans.